Here is a 435-residue protein sequence, read N- to C-terminus: Phosphomethylpyrimidine synthase (435 aa).

Substrate-binding positions include asparagine 67, methionine 96, tyrosine 125, histidine 163, 185–187 (SRG), 226–229 (DGLR), and glutamate 265. Histidine 269 serves as a coordination point for Zn(2+). A substrate-binding site is contributed by tyrosine 292. Histidine 333 is a Zn(2+) binding site. [4Fe-4S] cluster contacts are provided by cysteine 408, cysteine 411, and cysteine 415.

The protein belongs to the ThiC family. [4Fe-4S] cluster serves as cofactor.

It carries out the reaction 5-amino-1-(5-phospho-beta-D-ribosyl)imidazole + S-adenosyl-L-methionine = 4-amino-2-methyl-5-(phosphooxymethyl)pyrimidine + CO + 5'-deoxyadenosine + formate + L-methionine + 3 H(+). The protein operates within cofactor biosynthesis; thiamine diphosphate biosynthesis. Its function is as follows. Catalyzes the synthesis of the hydroxymethylpyrimidine phosphate (HMP-P) moiety of thiamine from aminoimidazole ribotide (AIR) in a radical S-adenosyl-L-methionine (SAM)-dependent reaction. The polypeptide is Phosphomethylpyrimidine synthase (Thermus thermophilus (strain ATCC 27634 / DSM 579 / HB8)).